Reading from the N-terminus, the 215-residue chain is 2-phospho-L-lactate guanylyltransferase (215 aa).

The protein belongs to the CofC family. As to quaternary structure, homodimer.

The enzyme catalyses (2S)-2-phospholactate + GTP + H(+) = (2S)-lactyl-2-diphospho-5'-guanosine + diphosphate. The protein operates within cofactor biosynthesis; coenzyme F420 biosynthesis. Functionally, guanylyltransferase that catalyzes the activation of (2S)-2-phospholactate (2-PL) as (2S)-lactyl-2-diphospho-5'-guanosine, via the condensation of 2-PL with GTP. It is involved in the biosynthesis of coenzyme F420, a hydride carrier cofactor. The chain is 2-phospho-L-lactate guanylyltransferase from Methanococcoides burtonii (strain DSM 6242 / NBRC 107633 / OCM 468 / ACE-M).